Reading from the N-terminus, the 248-residue chain is Molybdate/tungstate transport system permease protein WtpB (248 aa).

Topologically, residues 1–9 (MGGRDYTLY) are cytoplasmic. Residues 10–30 (LFAALGSFLIVYIALPIIVIF) traverse the membrane as a helical segment. At 31–56 (TKQALDFRMLVKTIHDPLVIEALRNS) the chain is on the extracellular side. The ABC transmembrane type-1 domain maps to 53–239 (LRNSLLTATA…GISLGIFVVL (187 aa)). A helical membrane pass occupies residues 57–77 (LLTATATALISLLFGVPLGYV). Residues 78–91 (LARKDFRGKSLVQA) are Cytoplasmic-facing. A helical transmembrane segment spans residues 92 to 112 (IIDVPIVIPHSVVGIMLLVTF). Residues 113 to 115 (SNA) are Extracellular-facing. The chain crosses the membrane as a helical span at residues 116 to 136 (ILDSYKGIIAAMLFVSAPFAI). Residues 137–164 (NSARDGFLAVDEKLEHVARTLGASKLRT) are Cytoplasmic-facing. A helical membrane pass occupies residues 165 to 185 (FFSISLPIALPSIASGAIMAW). Topologically, residues 186–223 (ARGISEVGAILIVAYYPKTAQVLVMEYFNNYGLRASRP) are extracellular. Residues 224–244 (ISVILMGISLGIFVVLRWLIG) form a helical membrane-spanning segment. Over 245 to 248 (KAKS) the chain is Cytoplasmic.

It belongs to the binding-protein-dependent transport system permease family. The complex is composed of two ATP-binding proteins (WtpC), two transmembrane proteins (WtpB) and a solute-binding protein (WtpA).

It localises to the cell membrane. Part of the ABC transporter complex WtpABC involved in molybdate/tungstate import. Probably responsible for the translocation of the substrate across the membrane. This is Molybdate/tungstate transport system permease protein WtpB (wtpB) from Pyrococcus abyssi (strain GE5 / Orsay).